The sequence spans 189 residues: Xanthine phosphoribosyltransferase (189 aa).

2 residues coordinate xanthine: leucine 20 and asparagine 27. Position 128–132 (alanine 128–alanine 132) interacts with 5-phospho-alpha-D-ribose 1-diphosphate. Lysine 156 contacts xanthine.

Belongs to the purine/pyrimidine phosphoribosyltransferase family. Xpt subfamily. Homodimer.

It localises to the cytoplasm. It carries out the reaction XMP + diphosphate = xanthine + 5-phospho-alpha-D-ribose 1-diphosphate. It functions in the pathway purine metabolism; XMP biosynthesis via salvage pathway; XMP from xanthine: step 1/1. Its function is as follows. Converts the preformed base xanthine, a product of nucleic acid breakdown, to xanthosine 5'-monophosphate (XMP), so it can be reused for RNA or DNA synthesis. The sequence is that of Xanthine phosphoribosyltransferase from Leuconostoc mesenteroides subsp. mesenteroides (strain ATCC 8293 / DSM 20343 / BCRC 11652 / CCM 1803 / JCM 6124 / NCDO 523 / NBRC 100496 / NCIMB 8023 / NCTC 12954 / NRRL B-1118 / 37Y).